Consider the following 452-residue polypeptide: Bifunctional F420 biosynthesis protein FbiB (452 aa).

The tract at residues 1–248 (MVSAPGDHAG…AGEEDLFWLG (248 aa)) is coenzyme F420:L-glutamate ligase. Residues 24 to 27 (LPEF), Ser-54, and Lys-59 each bind GTP. Asp-113 is a binding site for a divalent metal cation. GTP is bound at residue Asn-116. 2 residues coordinate a divalent metal cation: Asp-154 and Thr-155. The segment at 249–452 (TAEAVERGRR…RDPGDGLVER (204 aa)) is dehydro-coenzyme F420-0 reductase. Residues 264 to 268 (RRSVR) and Ala-292 each bind FMN. Asp-324 contributes to the coenzyme F420-(gamma-Glu)n binding site. The FMN site is built by Gly-403 and Arg-440.

It in the N-terminal section; belongs to the CofE family. Mg(2+) serves as cofactor. Mn(2+) is required as a cofactor. It depends on K(+) as a cofactor.

It catalyses the reaction oxidized coenzyme F420-0 + GTP + L-glutamate = oxidized coenzyme F420-1 + GDP + phosphate + H(+). It carries out the reaction oxidized coenzyme F420-0 + FMN + H(+) = dehydro coenzyme F420-0 + FMNH2. The catalysed reaction is oxidized coenzyme F420-1 + GTP + L-glutamate = oxidized coenzyme F420-2 + GDP + phosphate + H(+). It functions in the pathway cofactor biosynthesis; coenzyme F420 biosynthesis. Its function is as follows. Bifunctional enzyme that catalyzes the GTP-dependent successive addition of two or more gamma-linked L-glutamates to the L-lactyl phosphodiester of 7,8-didemethyl-8-hydroxy-5-deazariboflavin (F420-0) to form polyglutamated F420 derivatives, and the FMNH2-dependent reduction of dehydro-F420-0 to form F420-0. The sequence is that of Bifunctional F420 biosynthesis protein FbiB from Nocardia farcinica (strain IFM 10152).